A 68-amino-acid polypeptide reads, in one-letter code: Large ribosomal subunit protein uL29 (68 aa).

Belongs to the universal ribosomal protein uL29 family.

The protein is Large ribosomal subunit protein uL29 of Persephonella marina (strain DSM 14350 / EX-H1).